The chain runs to 165 residues: MEKMEKVEFIDVKVVPYRLLNPQTVETILNKIYDLDGIVRVLVHGPSIPKEIPYGPAKGIKVNHKDRQVIKVKGEEVELKVKVGEIIVGVLCDDKMDENIGKIEKIMDENLPCSYQMWVGTYTKRDVTVTDWMKYGPKFEKKLDPRYIGLVDPNSKVKENVKLIK.

As to quaternary structure, MCR is composed of three subunits: alpha, beta, and gamma. The function of protein D is not known.

The chain is Methyl-coenzyme M reductase II operon protein D (mrtD) from Methanothermus fervidus (strain ATCC 43054 / DSM 2088 / JCM 10308 / V24 S).